Consider the following 333-residue polypeptide: ADP-L-glycero-D-manno-heptose-6-epimerase (333 aa).

NADP(+) contacts are provided by residues 11-12, 32-33, lysine 39, lysine 54, 76-80, and asparagine 93; these read FI, DN, and QGACS. Catalysis depends on tyrosine 140, which acts as the Proton acceptor. Lysine 144 lines the NADP(+) pocket. Residue asparagine 170 participates in substrate binding. NADP(+) is bound by residues valine 171 and lysine 179. Lysine 179 acts as the Proton acceptor in catalysis. Substrate is bound by residues arginine 181, histidine 188, 202–205, arginine 215, and tyrosine 294; that span reads FGGW.

Belongs to the NAD(P)-dependent epimerase/dehydratase family. HldD subfamily. Homopentamer. The cofactor is NADP(+).

It catalyses the reaction ADP-D-glycero-beta-D-manno-heptose = ADP-L-glycero-beta-D-manno-heptose. It participates in nucleotide-sugar biosynthesis; ADP-L-glycero-beta-D-manno-heptose biosynthesis; ADP-L-glycero-beta-D-manno-heptose from D-glycero-beta-D-manno-heptose 7-phosphate: step 4/4. It functions in the pathway bacterial outer membrane biogenesis; LPS core biosynthesis. Its function is as follows. Catalyzes the interconversion between ADP-D-glycero-beta-D-manno-heptose and ADP-L-glycero-beta-D-manno-heptose via an epimerization at carbon 6 of the heptose. This Chromobacterium violaceum (strain ATCC 12472 / DSM 30191 / JCM 1249 / CCUG 213 / NBRC 12614 / NCIMB 9131 / NCTC 9757 / MK) protein is ADP-L-glycero-D-manno-heptose-6-epimerase.